A 183-amino-acid chain; its full sequence is Cuticle protein 2 (183 aa).

A signal peptide spans 1-15 (MKLIVVAALIGVCAG). The region spanning 58–121 (SQGFQYVYDT…AQGAHLPTPP (64 aa)) is the Chitin-binding type R&amp;R domain.

The sequence is that of Cuticle protein 2 from Lonomia obliqua (Moth).